The following is a 96-amino-acid chain: Large ribosomal subunit protein eL14 (96 aa).

Belongs to the eukaryotic ribosomal protein eL14 family.

The chain is Large ribosomal subunit protein eL14 from Saccharolobus solfataricus (strain ATCC 35092 / DSM 1617 / JCM 11322 / P2) (Sulfolobus solfataricus).